A 434-amino-acid polypeptide reads, in one-letter code: Na(+)/H(+) antiporter NhaA 1 (434 aa).

A run of 10 helical transmembrane segments spans residues 30-50 (TGGLLLLVFTVIALVWANVAG), 70-90 (LSIEHWAADGLLAIFFFVTGL), 108-128 (ALPIAAAVGGMAVPALLFVLV), 141-161 (VGWATPTATDIAFALGILAVV), 172-192 (FLLTLAVVDDLLGITVIAIFY), 195-215 (QVHWTPLLLALLTLAAFTVAV), 286-306 (FAVPVFALFSAGVAIGGVSGF), 318-338 (VIAGLVLGKPIGIVGTTWLLA), 354-374 (VLGMAMLAGMGFTVSLLIGSL), and 386-406 (VTLGVLVGSLLSAVLAAVVLS).

The protein belongs to the NhaA Na(+)/H(+) (TC 2.A.33) antiporter family.

It localises to the cell membrane. The enzyme catalyses Na(+)(in) + 2 H(+)(out) = Na(+)(out) + 2 H(+)(in). Its function is as follows. Na(+)/H(+) antiporter that extrudes sodium in exchange for external protons. The sequence is that of Na(+)/H(+) antiporter NhaA 1 from Kineococcus radiotolerans (strain ATCC BAA-149 / DSM 14245 / SRS30216).